Consider the following 250-residue polypeptide: tRNA (guanine-N(7)-)-methyltransferase (250 aa).

The S-adenosyl-L-methionine site is built by glutamate 86, glutamate 111, aspartate 138, and aspartate 161. Residue aspartate 161 is part of the active site. Substrate-binding positions include lysine 165, aspartate 197, and 229–232 (TEFE).

It belongs to the class I-like SAM-binding methyltransferase superfamily. TrmB family.

The catalysed reaction is guanosine(46) in tRNA + S-adenosyl-L-methionine = N(7)-methylguanosine(46) in tRNA + S-adenosyl-L-homocysteine. It functions in the pathway tRNA modification; N(7)-methylguanine-tRNA biosynthesis. Its function is as follows. Catalyzes the formation of N(7)-methylguanine at position 46 (m7G46) in tRNA. In Treponema pallidum (strain Nichols), this protein is tRNA (guanine-N(7)-)-methyltransferase.